Consider the following 199-residue polypeptide: DnaJ homolog subfamily C member 5B (199 aa).

2 positions are modified to phosphoserine: Ser-14 and Ser-16. The region spanning 19–84 (ALYEILGLQK…SKRNIYDKYG (66 aa)) is the J domain.

Interacts with the chaperone complex consisting of HSC70 and SGTA. In terms of processing, palmitoylated.

It localises to the membrane. The polypeptide is DnaJ homolog subfamily C member 5B (DNAJC5B) (Ailuropoda melanoleuca (Giant panda)).